A 378-amino-acid chain; its full sequence is Quinolinate synthase (378 aa).

Positions 59 and 80 each coordinate iminosuccinate. C125 serves as a coordination point for [4Fe-4S] cluster. Residues 151–153 (YAN) and S168 each bind iminosuccinate. Residue C212 participates in [4Fe-4S] cluster binding. Iminosuccinate-binding positions include 238–240 (HPE) and T255. Residue C309 coordinates [4Fe-4S] cluster.

The protein belongs to the quinolinate synthase family. Type 1 subfamily. [4Fe-4S] cluster is required as a cofactor.

It localises to the cytoplasm. It catalyses the reaction iminosuccinate + dihydroxyacetone phosphate = quinolinate + phosphate + 2 H2O + H(+). It functions in the pathway cofactor biosynthesis; NAD(+) biosynthesis; quinolinate from iminoaspartate: step 1/1. Its function is as follows. Catalyzes the condensation of iminoaspartate with dihydroxyacetone phosphate to form quinolinate. The protein is Quinolinate synthase of Burkholderia mallei (strain NCTC 10247).